The chain runs to 180 residues: tRNA (cytidine(56)-2'-O)-methyltransferase (180 aa).

Residues L82, 112 to 116, and 130 to 137 contribute to the S-adenosyl-L-methionine site; these read GAEKV and VGNQPHSE.

It belongs to the aTrm56 family. Homodimer.

It is found in the cytoplasm. The catalysed reaction is cytidine(56) in tRNA + S-adenosyl-L-methionine = 2'-O-methylcytidine(56) in tRNA + S-adenosyl-L-homocysteine + H(+). Its function is as follows. Specifically catalyzes the AdoMet-dependent 2'-O-ribose methylation of cytidine at position 56 in tRNAs. The polypeptide is tRNA (cytidine(56)-2'-O)-methyltransferase (Methanococcus vannielii (strain ATCC 35089 / DSM 1224 / JCM 13029 / OCM 148 / SB)).